The primary structure comprises 416 residues: Gamma-glutamyl phosphate reductase (416 aa).

Belongs to the gamma-glutamyl phosphate reductase family.

It localises to the cytoplasm. The catalysed reaction is L-glutamate 5-semialdehyde + phosphate + NADP(+) = L-glutamyl 5-phosphate + NADPH + H(+). Its pathway is amino-acid biosynthesis; L-proline biosynthesis; L-glutamate 5-semialdehyde from L-glutamate: step 2/2. Functionally, catalyzes the NADPH-dependent reduction of L-glutamate 5-phosphate into L-glutamate 5-semialdehyde and phosphate. The product spontaneously undergoes cyclization to form 1-pyrroline-5-carboxylate. The protein is Gamma-glutamyl phosphate reductase of Streptococcus uberis (strain ATCC BAA-854 / 0140J).